The chain runs to 807 residues: Histone transcription regulator slm9 (807 aa).

WD repeat units lie at residues serine 62–glutamine 100 and leucine 102–valine 140. Positions glutamate 144 to glutamate 164 are disordered. WD repeat units follow at residues glycine 182–serine 221, proline 230–asparagine 273, glycine 276–valine 322, and leucine 326–aspartate 367. Residues asparagine 388–arginine 437 form a disordered region. The span at arginine 395–lysine 409 shows a compositional bias: polar residues. Phosphoserine is present on residues serine 406, serine 421, and serine 422. Over residues lysine 426–valine 435 the composition is skewed to basic residues. WD repeat units lie at residues aspartate 492–serine 526 and alanine 528–serine 574.

This sequence belongs to the WD repeat HIR1 family. Interacts with hip1 and hip3.

Its subcellular location is the cytoplasm. It is found in the nucleus. In terms of biological role, probably required for replication-independent chromatin assembly. Required for transcriptional silencing in the outer repeat (otr) centromeric repeats and the Tf2 long terminal repeat retrotransposons. May play an indirect role in the regulation of cdc2 and/or wee1 at the G2/M stage of mitosis. This is Histone transcription regulator slm9 (slm9) from Schizosaccharomyces pombe (strain 972 / ATCC 24843) (Fission yeast).